The primary structure comprises 100 residues: CRYICPLGAALAIPSKFRLFDWLKRRKECGNPCQLCAKECEIQAIHPDGRINGNECHYCLDCQMTYHNDNKCPPLINKRKKRGKKAADPQLIPAVEVSDA.

The protein localises to the cell membrane. In terms of biological role, transcriptional activator of the nitrous-oxide reductase gene NosZ. The chain is Regulatory protein NosR (nosR) from Pseudomonas aeruginosa.